Here is a 70-residue protein sequence, read N- to C-terminus: MLNPPLNQLTAKVNSKYLIATTAAKRARELDERRETALLDQYQSAKPVGKALEEIADGKIEPVVPKEYLG.

It belongs to the RNA polymerase subunit omega family. As to quaternary structure, the RNAP catalytic core consists of 2 alpha, 1 beta, 1 beta' and 1 omega subunit. When a sigma factor is associated with the core the holoenzyme is formed, which can initiate transcription.

The catalysed reaction is RNA(n) + a ribonucleoside 5'-triphosphate = RNA(n+1) + diphosphate. In terms of biological role, promotes RNA polymerase assembly. Latches the N- and C-terminal regions of the beta' subunit thereby facilitating its interaction with the beta and alpha subunits. The protein is DNA-directed RNA polymerase subunit omega of Staphylococcus epidermidis (strain ATCC 35984 / DSM 28319 / BCRC 17069 / CCUG 31568 / BM 3577 / RP62A).